Consider the following 360-residue polypeptide: S-adenosylmethionine:tRNA ribosyltransferase-isomerase (360 aa).

The protein belongs to the QueA family. As to quaternary structure, monomer.

It localises to the cytoplasm. The catalysed reaction is 7-aminomethyl-7-carbaguanosine(34) in tRNA + S-adenosyl-L-methionine = epoxyqueuosine(34) in tRNA + adenine + L-methionine + 2 H(+). The protein operates within tRNA modification; tRNA-queuosine biosynthesis. Functionally, transfers and isomerizes the ribose moiety from AdoMet to the 7-aminomethyl group of 7-deazaguanine (preQ1-tRNA) to give epoxyqueuosine (oQ-tRNA). In Rhodopseudomonas palustris (strain TIE-1), this protein is S-adenosylmethionine:tRNA ribosyltransferase-isomerase.